The sequence spans 584 residues: 2-succinyl-5-enolpyruvyl-6-hydroxy-3-cyclohexene-1-carboxylate synthase (584 aa).

The protein belongs to the TPP enzyme family. MenD subfamily. Homodimer. Mg(2+) is required as a cofactor. It depends on Mn(2+) as a cofactor. Requires thiamine diphosphate as cofactor.

It carries out the reaction isochorismate + 2-oxoglutarate + H(+) = 5-enolpyruvoyl-6-hydroxy-2-succinyl-cyclohex-3-ene-1-carboxylate + CO2. It functions in the pathway quinol/quinone metabolism; 1,4-dihydroxy-2-naphthoate biosynthesis; 1,4-dihydroxy-2-naphthoate from chorismate: step 2/7. It participates in quinol/quinone metabolism; menaquinone biosynthesis. Functionally, catalyzes the thiamine diphosphate-dependent decarboxylation of 2-oxoglutarate and the subsequent addition of the resulting succinic semialdehyde-thiamine pyrophosphate anion to isochorismate to yield 2-succinyl-5-enolpyruvyl-6-hydroxy-3-cyclohexene-1-carboxylate (SEPHCHC). The polypeptide is 2-succinyl-5-enolpyruvyl-6-hydroxy-3-cyclohexene-1-carboxylate synthase (Bacillus anthracis).